A 569-amino-acid chain; its full sequence is Aspartate--tRNA ligase, cytoplasmic 2 (569 aa).

The interval 1 to 23 (MSEENNHKEKSKNEIKKEKKKIE) is disordered. The aspartate stretch occupies residues 292–295 (QFYR). Arg314 serves as a coordination point for L-aspartate. Residues 314-316 (RTD) and 322-324 (RHL) each bind ATP. Residues Ser475 and Arg479 each contribute to the L-aspartate site. 540–543 (GLER) contacts ATP.

Belongs to the class-II aminoacyl-tRNA synthetase family. Type 2 subfamily.

Its subcellular location is the cytoplasm. The catalysed reaction is tRNA(Asp) + L-aspartate + ATP = L-aspartyl-tRNA(Asp) + AMP + diphosphate. The chain is Aspartate--tRNA ligase, cytoplasmic 2 (aspS2) from Dictyostelium discoideum (Social amoeba).